The sequence spans 446 residues: RUN domain-containing protein 3A (446 aa).

The segment at methionine 1–alanine 298 is interaction with RAP2A. Residues aspartate 52–glutamate 189 enclose the RUN domain. Threonine 215 is modified (phosphothreonine). Positions aspartate 216 to proline 239 are disordered. Serine 232 is subject to Phosphoserine. Residues tyrosine 267–isoleucine 322 adopt a coiled-coil conformation. The span at proline 372–glutamine 384 shows a compositional bias: polar residues. Residues proline 372 to proline 403 are disordered. Basic and acidic residues predominate over residues arginine 385–glutamate 394. A phosphoserine mark is found at serine 416 and serine 419.

It belongs to the RUNDC3 family. In terms of assembly, interacts with the GTP-bound form of RAP2A. Brain.

Functionally, may act as an effector of RAP2A in neuronal cells. In Mus musculus (Mouse), this protein is RUN domain-containing protein 3A (Rundc3a).